The following is a 589-amino-acid chain: Probable ATP-dependent RNA helicase DDX59 (589 aa).

Disordered regions lie at residues 1-36 (MFVP…QLEG) and 48-98 (KEAV…SKTQ). Over residues 12–27 (NSNDDLKSCEAKKSKP) the composition is skewed to basic and acidic residues. Residue Lys26 forms a Glycyl lysine isopeptide (Lys-Gly) (interchain with G-Cter in SUMO2) linkage. The residue at position 64 (Ser64) is a Phosphoserine. Residues 80–91 (GVKDSHPSEEPV) are compositionally biased toward basic and acidic residues. The HIT-type zinc-finger motif lies at 104 to 133 (GEPVCVVCGRYGEYICDKTDEDVCSLECKA). Ser156 and Ser160 each carry phosphoserine. The Q motif motif lies at 203–231 (IDFEHCGFPETLNQNLKKSGYEVPTPIQM). The Helicase ATP-binding domain occupies 234–375 (IPVGLLGRDI…DQLLHNPVRI (142 aa)). 247-254 (ADTGSGKT) is an ATP binding site. Residues 323–326 (VKAD) carry the DEAD box motif. Residues 399–549 (KKKKLFEILN…ILPPQLLNSP (151 aa)) enclose the Helicase C-terminal domain.

The protein belongs to the DEAD box helicase family. DDX59 subfamily. In terms of assembly, interacts (via HIT-type zinc finger) with the RUVBL1/RUVBL2 complex in the presence of ADP.

It localises to the cytoplasm. Its subcellular location is the nucleus. The catalysed reaction is ATP + H2O = ADP + phosphate + H(+). The chain is Probable ATP-dependent RNA helicase DDX59 (Ddx59) from Rattus norvegicus (Rat).